Consider the following 364-residue polypeptide: Ferrochelatase (364 aa).

The Fe cation site is built by H210 and E291.

It belongs to the ferrochelatase family.

It localises to the cytoplasm. It carries out the reaction heme b + 2 H(+) = protoporphyrin IX + Fe(2+). It participates in porphyrin-containing compound metabolism; protoheme biosynthesis; protoheme from protoporphyrin-IX: step 1/1. Functionally, catalyzes the ferrous insertion into protoporphyrin IX. The sequence is that of Ferrochelatase from Idiomarina loihiensis (strain ATCC BAA-735 / DSM 15497 / L2-TR).